A 278-amino-acid polypeptide reads, in one-letter code: Elongation factor Ts (278 aa).

The tract at residues Thr-82–Val-85 is involved in Mg(2+) ion dislocation from EF-Tu.

This sequence belongs to the EF-Ts family.

It is found in the cytoplasm. Associates with the EF-Tu.GDP complex and induces the exchange of GDP to GTP. It remains bound to the aminoacyl-tRNA.EF-Tu.GTP complex up to the GTP hydrolysis stage on the ribosome. The protein is Elongation factor Ts of Cytophaga hutchinsonii (strain ATCC 33406 / DSM 1761 / CIP 103989 / NBRC 15051 / NCIMB 9469 / D465).